A 261-amino-acid chain; its full sequence is Sulfur carrier protein FdhD (261 aa).

Cys105 acts as the Cysteine persulfide intermediate in catalysis. 245–250 (FIRGDR) is a binding site for Mo-bis(molybdopterin guanine dinucleotide).

This sequence belongs to the FdhD family.

It is found in the cytoplasm. In terms of biological role, required for formate dehydrogenase (FDH) activity. Acts as a sulfur carrier protein that transfers sulfur from IscS to the molybdenum cofactor prior to its insertion into FDH. The polypeptide is Sulfur carrier protein FdhD (Listeria monocytogenes serotype 4b (strain F2365)).